The chain runs to 358 residues: Type II restriction enzyme SacI (358 aa).

The enzyme catalyses Endonucleolytic cleavage of DNA to give specific double-stranded fragments with terminal 5'-phosphates.. In terms of biological role, a subtype P restriction enzyme that recognizes the double-stranded sequence 5'-GAGCTC-3' and cleaves after T-5. This chain is Type II restriction enzyme SacI, found in Streptomyces achromogenes.